The primary structure comprises 172 residues: Putative phosphoesterase BCE_1348 (172 aa).

Histidine 34 serves as the catalytic Proton donor. Short sequence motifs (HXTX) lie at residues 34-37 and 115-118; these read HITL and HLTI. Histidine 115 functions as the Proton acceptor in the catalytic mechanism.

The protein belongs to the 2H phosphoesterase superfamily. YjcG family.

The protein is Putative phosphoesterase BCE_1348 of Bacillus cereus (strain ATCC 10987 / NRS 248).